We begin with the raw amino-acid sequence, 388 residues long: Probable protein phosphatase 2C 43 (388 aa).

The PPM-type phosphatase domain maps to 53 to 352; the sequence is EFSFAVVQAN…DDITVVVVFI (300 aa). Mn(2+) is bound by residues aspartate 84, glycine 85, aspartate 284, and aspartate 343.

It belongs to the PP2C family. Mg(2+) is required as a cofactor. It depends on Mn(2+) as a cofactor.

It catalyses the reaction O-phospho-L-seryl-[protein] + H2O = L-seryl-[protein] + phosphate. The enzyme catalyses O-phospho-L-threonyl-[protein] + H2O = L-threonyl-[protein] + phosphate. The sequence is that of Probable protein phosphatase 2C 43 from Oryza sativa subsp. japonica (Rice).